The following is a 256-amino-acid chain: MRLFLALLALGFAAVAAVPANPQRIVGGSTTTIQQYPTIVALLFSRNGNTFFQACGGIILNNRNILTAAHCPHGDAVNRWRVRSGSTFANSGGAVHNLNRVRIHPNYNSRTLDNDIAIMRTSSNIAFNNAAQPARIAGANYNVGDNQVVWAAGWGDIRSGGPPSEQLRHVQVWTVNQATCRSRYASIGRSVTDNMLCSGWLDVGGRDQCQGDSGGPLYHNGVVVGVSSWGEECALARFPGVNARVSRFANWIRNNS.

Residues 1–17 form the signal peptide; it reads MRLFLALLALGFAAVAA. The propeptide at 18 to 24 is activation peptide; that stretch reads VPANPQR. One can recognise a Peptidase S1 domain in the interval 25–256; the sequence is IVGGSTTTIQ…RFANWIRNNS (232 aa). A disulfide bridge links Cys55 with Cys71. Catalysis depends on charge relay system residues His70 and Asp115. 2 disulfide bridges follow: Cys180–Cys197 and Cys209–Cys233. Residue Ser213 is the Charge relay system of the active site.

The protein belongs to the peptidase S1 family. Midgut.

It is found in the secreted. The protein resides in the extracellular space. It catalyses the reaction Preferential cleavage: Arg-|-Xaa, Lys-|-Xaa.. This Manduca sexta (Tobacco hawkmoth) protein is Trypsin, alkaline B.